The primary structure comprises 513 residues: Cytochrome P450 monooxygenase ARMGADRAFT_1018418 (513 aa).

The helical transmembrane segment at 1–21 (MTHASSAWFLAAVVIVTFIVV) threads the bilayer. Residue Cys-435 participates in heme binding. Asn-442 carries an N-linked (GlcNAc...) asparagine glycan.

It belongs to the cytochrome P450 family. The cofactor is heme.

Its subcellular location is the membrane. Its pathway is secondary metabolite biosynthesis. Cytochrome P450 monooxygenase, part of the gene cluster that mediates the biosynthesis of melleolides, a range of antifungal and phytotoxic polyketide derivatives composed of an orsellinic acid (OA) moiety esterified to various sesquiterpene alcohols. The first step in melleolides biosynthesis is performed by the delta(6)-protoilludene synthase PRO1 which catalyzes the cyclization of farnesyl diphosphate to protoilludene. The orsellinic acid synthase armB produces OA by condensing acetyl-CoA with 3 malonyl-CoA units in a three-round chain elongation reaction folowed by a C2-C7 ring closure. ArmB further catalyzes the trans-esterification of OA to the various sesquiterpene alcohols resulting from the hydroxylation of protoilludene. The melleolides cluster also includes 5 cytochrome P450 monooxygenases, 4 NAD(+)-dependent oxidoreductases, one flavin-dependent oxidoreductase, and one O-methyltransferase. The cytochrome P450 monooxygenases may be involved in protoilludene hydroxylation to elaborate melleolides with multiple alcohol groups, such as melleolide D, which carries alcohol functionalities at C-4, C-5, C-10, and C-13. The role of the NAD(+)-dependent enzymes remains unknown. Numerous melleolides, including arnamial, show 5'-O-methylation of the aromatic moiety which may be catalyzed by the methyltransferase encoded in the cluster. The flavin-dependent oxidoreductase might represent the dehydrogenase yielding the aldehyde in position 1 of arnamial and other melleolides. Finally, several halogenase localized outside of the cluster, are able to catalyze the transfer of a single chlorine atom to the melleolide backbone, resulting in a 6'-chloromelleolide product. In Armillaria gallica (Bulbous honey fungus), this protein is Cytochrome P450 monooxygenase ARMGADRAFT_1018418.